A 369-amino-acid chain; its full sequence is Cytokine receptor common subunit gamma (369 aa).

An N-terminal signal peptide occupies residues 1–22; sequence MLKPSLPFTSLLFLQLPLLGVG. Over 23–262 the chain is Extracellular; it reads LNTTILTPNG…ENPFLFALEA (240 aa). N-linked (GlcNAc...) asparagine glycosylation is found at Asn24, Asn71, Asn75, and Asn84. A disulfide bridge links Cys62 with Cys72. A disulfide bond links Cys102 and Cys115. The region spanning 156–253 is the Fibronectin type-III domain; the sequence is APENLTLHKL…IHWGSNTSKE (98 aa). Asn159 carries N-linked (GlcNAc...) asparagine glycosylation. Cys182 and Cys231 are joined by a disulfide. A WSXWS motif motif is present at residues 237 to 241; it reads WSEWS. A glycan (N-linked (GlcNAc...) asparagine) is linked at Asn249. The chain crosses the membrane as a helical span at residues 263-283; the sequence is VVISVGSMGLIISLLCVYFWL. The Cytoplasmic segment spans residues 284–369; sequence ERTMPRIPTL…PPCYTLKPET (86 aa). The Box 1 motif signature appears at 286–294; it reads TMPRIPTLK. Thr292 bears the Phosphothreonine mark.

Belongs to the type I cytokine receptor family. Type 5 subfamily. As to quaternary structure, the gamma subunit is common to the IL2, IL4, IL7, IL15, IL21 and probably also the IL13 receptors. Interacts with SHB upon interleukin stimulation. Interacts with IL9. In terms of assembly, (Microbial infection) Interacts with HTLV-1 accessory protein p12I.

It is found in the cell membrane. It localises to the cell surface. In terms of biological role, common subunit for the receptors for a variety of interleukins. Probably in association with IL15RA, involved in the stimulation of neutrophil phagocytosis by IL15. The polypeptide is Cytokine receptor common subunit gamma (IL2RG) (Homo sapiens (Human)).